Here is a 355-residue protein sequence, read N- to C-terminus: Methylthioribose-1-phosphate isomerase (355 aa).

Substrate is bound by residues 47–49 (RGA), Arg-90, and Gln-197. The active-site Proton donor is Asp-238. 248–249 (NK) is a binding site for substrate.

Belongs to the eIF-2B alpha/beta/delta subunits family. MtnA subfamily.

It catalyses the reaction 5-(methylsulfanyl)-alpha-D-ribose 1-phosphate = 5-(methylsulfanyl)-D-ribulose 1-phosphate. Its pathway is amino-acid biosynthesis; L-methionine biosynthesis via salvage pathway; L-methionine from S-methyl-5-thio-alpha-D-ribose 1-phosphate: step 1/6. Functionally, catalyzes the interconversion of methylthioribose-1-phosphate (MTR-1-P) into methylthioribulose-1-phosphate (MTRu-1-P). This chain is Methylthioribose-1-phosphate isomerase, found in Herpetosiphon aurantiacus (strain ATCC 23779 / DSM 785 / 114-95).